Reading from the N-terminus, the 265-residue chain is Secreted RxLR effector protein 146 (265 aa).

Positions 1 to 25 are cleaved as a signal peptide; the sequence is MRYYTQVVAASLVATLAVVDSIVFA. The short motif at 32-50 is the RxLR-dEER element; sequence RFLRQDGATVTRGGKGEER. 2 N-linked (GlcNAc...) asparagine glycosylation sites follow: asparagine 71 and asparagine 148.

The protein belongs to the RxLR effector family.

It localises to the secreted. It is found in the host nucleus. The protein resides in the host cytoplasm. In terms of biological role, secreted effector that completely suppresses the host cell death induced by cell death-inducing proteins. This Plasmopara viticola (Downy mildew of grapevine) protein is Secreted RxLR effector protein 146.